The following is a 616-amino-acid chain: uncharacterized protein (616 aa).

Disordered regions lie at residues 166-243 (SRTY…TPEL) and 272-298 (DHEE…IEEI). Basic and acidic residues predominate over residues 184 to 200 (RVDESRPSENSSRHDYV). Polar residues predominate over residues 221–237 (TRTSNVTQTQPPTNQVF). The segment covering 272–287 (DHEEEEGQDDDEETEI) has biased composition (acidic residues). In terms of domain architecture, Ubiquitin-like spans 343-417 (ILIKLKFMND…VHCHISTTPY (75 aa)).

This is an uncharacterized protein from Caenorhabditis elegans.